A 121-amino-acid polypeptide reads, in one-letter code: Basic phospholipase A2 BmjeTX-I (121 aa).

Disulfide bonds link Cys26–Cys114, Cys28–Cys45, Cys44–Cys95, Cys50–Cys121, Cys51–Cys88, Cys58–Cys82, and Cys76–Cys86. Ca(2+) is bound by residues Tyr27, Gly29, and Gly31. The active site involves His48. Asp49 serves as a coordination point for Ca(2+). Asp89 is an active-site residue.

The cofactor is Ca(2+). In terms of tissue distribution, expressed by the venom gland.

Its subcellular location is the secreted. It carries out the reaction a 1,2-diacyl-sn-glycero-3-phosphocholine + H2O = a 1-acyl-sn-glycero-3-phosphocholine + a fatty acid + H(+). In terms of biological role, snake venom phospholipase A2 (PLA2) that induces a slight blockade of neuromuscular contraction in an indirectly stimulated chick biventer cervicis nerve-muscle preparation. Does not inhibit contraction of chick biventer cervicic nerve-muscle preparation in response to treatment with acetylcholine or KCl. The neuromuscular blockade is mediated by inhibitory action at the presynaptic motor nerve endings. Lyses skeletal myoblasts and myotubes in vitro, and intramuscular injection causes local muscle necrosis. Induces edema in the mouse foot pad. Induces a transient increase of IL-6 levels. PLA2 catalyzes the calcium-dependent hydrolysis of the 2-acyl groups in 3-sn-phosphoglycerides. The chain is Basic phospholipase A2 BmjeTX-I from Bothrops marajoensis (Marajo lancehead).